Here is a 244-residue protein sequence, read N- to C-terminus: Ras-like protein family member 11B (244 aa).

Residues 19–242 (PSSRVIKIAV…VLSAKVRTVT (224 aa)) are small GTPase-like. GTP-binding positions include 30–37 (GGSGVGKT), 77–81 (DTPGV), and 142–145 (NKAD). A disordered region spans residues 200–222 (INATSSVTEKKRSPLIPRPKSPN).

Belongs to the small GTPase superfamily. Ras family.

The enzyme catalyses GTP + H2O = GDP + phosphate + H(+). The chain is Ras-like protein family member 11B from Danio rerio (Zebrafish).